Consider the following 443-residue polypeptide: Proline--tRNA ligase (443 aa).

It belongs to the class-II aminoacyl-tRNA synthetase family. ProS type 2 subfamily. In terms of assembly, homodimer.

The protein localises to the cytoplasm. It carries out the reaction tRNA(Pro) + L-proline + ATP = L-prolyl-tRNA(Pro) + AMP + diphosphate. In terms of biological role, catalyzes the attachment of proline to tRNA(Pro) in a two-step reaction: proline is first activated by ATP to form Pro-AMP and then transferred to the acceptor end of tRNA(Pro). This Zymomonas mobilis subsp. mobilis (strain ATCC 31821 / ZM4 / CP4) protein is Proline--tRNA ligase.